Reading from the N-terminus, the 151-residue chain is 3-hydroxyacyl-thioester dehydratase Z (151 aa).

In terms of domain architecture, MaoC-like spans 11–131 (AAAAGEKVGQ…TVQATVSTTV (121 aa)). Residues 60–63 (IAHG), 86–89 (AINY), 97–99 (PAP), Gln-124, and Arg-148 each bind substrate.

It belongs to the enoyl-CoA hydratase/isomerase family. In terms of assembly, homodimer.

The catalysed reaction is a (3R)-3-hydroxyacyl-CoA = a (2E)-enoyl-CoA + H2O. Shows trans-enoyl-CoA hydratase/3-hydroxyacyl-CoA dehydratase activity. This Mycobacterium bovis (strain ATCC BAA-935 / AF2122/97) protein is 3-hydroxyacyl-thioester dehydratase Z.